Here is a 505-residue protein sequence, read N- to C-terminus: 2,3-bisphosphoglycerate-independent phosphoglycerate mutase (505 aa).

Mn(2+) is bound by residues aspartate 12 and serine 62. The Phosphoserine intermediate role is filled by serine 62. Substrate contacts are provided by residues histidine 123, 153–154, arginine 185, arginine 191, 257–260, and lysine 330; these read RD and RPDR. Mn(2+) is bound by residues aspartate 397, histidine 401, aspartate 438, histidine 439, and histidine 456.

It belongs to the BPG-independent phosphoglycerate mutase family. Monomer. It depends on Mn(2+) as a cofactor.

It carries out the reaction (2R)-2-phosphoglycerate = (2R)-3-phosphoglycerate. The protein operates within carbohydrate degradation; glycolysis; pyruvate from D-glyceraldehyde 3-phosphate: step 3/5. Functionally, catalyzes the interconversion of 2-phosphoglycerate and 3-phosphoglycerate. This chain is 2,3-bisphosphoglycerate-independent phosphoglycerate mutase, found in Staphylococcus haemolyticus (strain JCSC1435).